The following is a 447-amino-acid chain: MTGQPYLDLPRARQARGQVALPGSKSISNRVLLLAALAAGRTDISGLLDSDDTRVMLAALRQLGVELAEAGEGRVTVGGAGRFPVKQADLFLGNAGTAFRPLTAALALMGGQYRLSGVPRMHERPIGDLVDALRQWGARIDYLGQAGYPPLAVGEGRIRADAPARVQGAVSSQFLTALLLAAPVLAQGSDRPVVIEVAGELISKPYIEITLNLMARYGVQVRRDGWRTFTIEPGAAYRSPGAIAVEGDASSASYFLALGAIGGGPVRVTGVGADSIQGDVAFARTLADMGVQIDYGPDWIEARGVRVDQGGRLKAFDTDFNLIPDAAMTAAALALYADGPCRLRNIGSWRVKETDRIHAMHTELAKLGAEVESGPDWLRITPPADGGWRDAHIGTWDDHRMAMCFSLAAFGPAAVRILDPGCVSKTFPDYFDVYAGLVSGAPDSYDD.

Residues Lys-25, Ser-26, and Arg-30 each coordinate 3-phosphoshikimate. Residue Lys-25 participates in phosphoenolpyruvate binding. Gly-96 and Arg-124 together coordinate phosphoenolpyruvate. 3-phosphoshikimate contacts are provided by Ser-171, Ser-172, Gln-173, Ser-203, Asp-325, and Lys-352. Gln-173 is a binding site for phosphoenolpyruvate. Residue Asp-325 is the Proton acceptor of the active site. 3 residues coordinate phosphoenolpyruvate: Arg-356, Arg-400, and Lys-425.

It belongs to the EPSP synthase family. In terms of assembly, monomer.

Its subcellular location is the cytoplasm. It catalyses the reaction 3-phosphoshikimate + phosphoenolpyruvate = 5-O-(1-carboxyvinyl)-3-phosphoshikimate + phosphate. Its pathway is metabolic intermediate biosynthesis; chorismate biosynthesis; chorismate from D-erythrose 4-phosphate and phosphoenolpyruvate: step 6/7. Functionally, catalyzes the transfer of the enolpyruvyl moiety of phosphoenolpyruvate (PEP) to the 5-hydroxyl of shikimate-3-phosphate (S3P) to produce enolpyruvyl shikimate-3-phosphate and inorganic phosphate. In Bordetella petrii (strain ATCC BAA-461 / DSM 12804 / CCUG 43448), this protein is 3-phosphoshikimate 1-carboxyvinyltransferase.